We begin with the raw amino-acid sequence, 176 residues long: Conidiation-specific protein 8 (176 aa).

Disordered regions lie at residues 1-66 (MDDT…SKLI) and 79-162 (AASE…PQGF). Residues 79 to 99 (AASEAFRSERSASTSSTTSET) are compositionally biased toward low complexity.

The polypeptide is Conidiation-specific protein 8 (con-8) (Neurospora crassa (strain ATCC 24698 / 74-OR23-1A / CBS 708.71 / DSM 1257 / FGSC 987)).